A 432-amino-acid chain; its full sequence is Enolase 1 (432 aa).

Residue Gln163 participates in (2R)-2-phosphoglycerate binding. Glu205 (proton donor) is an active-site residue. Mg(2+) contacts are provided by Asp242, Glu287, and Asp314. Positions 339, 368, 369, and 390 each coordinate (2R)-2-phosphoglycerate. Lys339 acts as the Proton acceptor in catalysis.

Belongs to the enolase family. The cofactor is Mg(2+).

It localises to the cytoplasm. The protein resides in the secreted. The protein localises to the cell surface. The catalysed reaction is (2R)-2-phosphoglycerate = phosphoenolpyruvate + H2O. The protein operates within carbohydrate degradation; glycolysis; pyruvate from D-glyceraldehyde 3-phosphate: step 4/5. Functionally, catalyzes the reversible conversion of 2-phosphoglycerate (2-PG) into phosphoenolpyruvate (PEP). It is essential for the degradation of carbohydrates via glycolysis. The polypeptide is Enolase 1 (Lactobacillus johnsonii (strain CNCM I-12250 / La1 / NCC 533)).